The sequence spans 310 residues: Ribosomal RNA small subunit methyltransferase H (310 aa).

S-adenosyl-L-methionine is bound by residues 40 to 42 (GGH), aspartate 59, phenylalanine 89, aspartate 104, and glutamine 111.

This sequence belongs to the methyltransferase superfamily. RsmH family.

The protein localises to the cytoplasm. The enzyme catalyses cytidine(1402) in 16S rRNA + S-adenosyl-L-methionine = N(4)-methylcytidine(1402) in 16S rRNA + S-adenosyl-L-homocysteine + H(+). Specifically methylates the N4 position of cytidine in position 1402 (C1402) of 16S rRNA. The chain is Ribosomal RNA small subunit methyltransferase H from Amoebophilus asiaticus (strain 5a2).